The following is a 132-amino-acid chain: Small ribosomal subunit protein uS8 (132 aa).

This sequence belongs to the universal ribosomal protein uS8 family. In terms of assembly, part of the 30S ribosomal subunit. Contacts proteins S5 and S12.

Functionally, one of the primary rRNA binding proteins, it binds directly to 16S rRNA central domain where it helps coordinate assembly of the platform of the 30S subunit. This chain is Small ribosomal subunit protein uS8, found in Bacillus cytotoxicus (strain DSM 22905 / CIP 110041 / 391-98 / NVH 391-98).